Here is a 118-residue protein sequence, read N- to C-terminus: Large ribosomal subunit protein bL21c (118 aa).

It belongs to the bacterial ribosomal protein bL21 family. As to quaternary structure, part of the 50S ribosomal subunit.

Its subcellular location is the plastid. The protein resides in the chloroplast. Its function is as follows. This protein binds to 23S rRNA. This is Large ribosomal subunit protein bL21c from Anthoceros angustus (Hornwort).